We begin with the raw amino-acid sequence, 219 residues long: MNQDELKTLVGRAALEYVPEGSIVGVGTGSTVNCFIDALAGIKERIAGAVSSSVKSTERLREKGIRVFEAAAVESLPVYIDGADEIDPHGCMIKGGGAALTREKIVADLAERFVCIADASKLVDVLGRFPLPVEVLPMAVSQIQRRFAKLGATATVREGVITDNGQLILDVQGLRIGDPLAFETEVNQWPGVVTVGVFARHKASVCLLGTPEGVKTLRF.

Substrate is bound by residues 28–31, 81–84, and 94–97; these read TGST, DGAD, and KGGG. The active-site Proton acceptor is Glu-103. Residue Lys-121 participates in substrate binding.

The protein belongs to the ribose 5-phosphate isomerase family. Homodimer.

It carries out the reaction aldehydo-D-ribose 5-phosphate = D-ribulose 5-phosphate. It participates in carbohydrate degradation; pentose phosphate pathway; D-ribose 5-phosphate from D-ribulose 5-phosphate (non-oxidative stage): step 1/1. Functionally, catalyzes the reversible conversion of ribose-5-phosphate to ribulose 5-phosphate. This chain is Ribose-5-phosphate isomerase A, found in Methylibium petroleiphilum (strain ATCC BAA-1232 / LMG 22953 / PM1).